The sequence spans 279 residues: Aspartate/glutamate leucyltransferase (279 aa).

The disordered stretch occupies residues 245 to 279 (ARERGARPPRGPGALKDACDLPLSDAQPADIEDLD).

Belongs to the R-transferase family. Bpt subfamily.

The protein resides in the cytoplasm. The catalysed reaction is N-terminal L-glutamyl-[protein] + L-leucyl-tRNA(Leu) = N-terminal L-leucyl-L-glutamyl-[protein] + tRNA(Leu) + H(+). The enzyme catalyses N-terminal L-aspartyl-[protein] + L-leucyl-tRNA(Leu) = N-terminal L-leucyl-L-aspartyl-[protein] + tRNA(Leu) + H(+). Its function is as follows. Functions in the N-end rule pathway of protein degradation where it conjugates Leu from its aminoacyl-tRNA to the N-termini of proteins containing an N-terminal aspartate or glutamate. The polypeptide is Aspartate/glutamate leucyltransferase (Caulobacter vibrioides (strain ATCC 19089 / CIP 103742 / CB 15) (Caulobacter crescentus)).